Here is a 126-residue protein sequence, read N- to C-terminus: Histone H2B-alpha (126 aa).

The disordered stretch occupies residues 1–34; that stretch reads MSAAEKKPASKAPAGKAPRDTMKSADKKRGKNRK. Residues lysine 6 and lysine 7 each carry the N6-acetyllysine; alternate modification. Glycyl lysine isopeptide (Lys-Gly) (interchain with G-Cter in SUMO); alternate cross-links involve residues lysine 6 and lysine 7. Serine 10 carries the post-translational modification Phosphoserine. Lysine 11 is subject to N6-acetyllysine. The span at 17–27 shows a compositional bias: basic and acidic residues; that stretch reads APRDTMKSADK. Lysine 120 participates in a covalent cross-link: Glycyl lysine isopeptide (Lys-Gly) (interchain with G-Cter in ubiquitin).

Belongs to the histone H2B family. As to quaternary structure, the nucleosome is a histone octamer containing two molecules each of H2A, H2B, H3 and H4 assembled in one H3-H4 heterotetramer and two H2A-H2B heterodimers. The octamer wraps approximately 147 bp of DNA. Interacts with rik1. In terms of processing, monoubiquitinated by the rhp6/ubc2-bre1 complex to form H2BK123ub1. H2BK123ub1 gives a specific tag for epigenetic transcriptional activation and is also prerequisite for H3K4me and H3K79me formation. H2BK123ub1 also modulates the formation of double-strand breaks during meiosis and is a prerequisite for DNA-damage checkpoint activation. Phosphorylated by shk1 to form H2BS10ph during progression through meiotic prophase. May be correlated with chromosome condensation. Post-translationally, acetylation of N-terminal lysines and particularly formation of H2BK11ac has a positive effect on transcription. In terms of processing, sumoylation to form H2BK6su or H2BK7su occurs preferentially near the telomeres and represses gene transcription.

The protein localises to the nucleus. It is found in the chromosome. Core component of nucleosome. Nucleosomes wrap and compact DNA into chromatin, limiting DNA accessibility to the cellular machineries which require DNA as a template. Histones thereby play a central role in transcription regulation, DNA repair, DNA replication and chromosomal stability. DNA accessibility is regulated via a complex set of post-translational modifications of histones, also called histone code, and nucleosome remodeling. This Schizosaccharomyces pombe (strain 972 / ATCC 24843) (Fission yeast) protein is Histone H2B-alpha (htb1).